A 666-amino-acid chain; its full sequence is ESX-1 secretion-associated protein EspI (666 aa).

Residues M1–M15 are compositionally biased toward basic and acidic residues. The tract at residues M1 to Q378 is disordered. Positions A22–A31 are enriched in low complexity. Pro residues-rich tracts occupy residues A64–M80, P87–T144, and P188–S205. The segment covering H222–R231 has biased composition (basic residues). The span at P284–S297 shows a compositional bias: pro residues. Basic residues predominate over residues P357–K371. L424–T431 is an ATP binding site.

Its function is as follows. Required to repress ESX-1-mediated secretion under low ATP conditions. This function requires the ATP-binding motif. The sequence is that of ESX-1 secretion-associated protein EspI from Mycobacterium tuberculosis (strain CDC 1551 / Oshkosh).